Reading from the N-terminus, the 371-residue chain is Signal peptide peptidase-like 1 (371 aa).

The Lumenal portion of the chain corresponds to 1-6; it reads MESLWK. The chain crosses the membrane as a helical span at residues 7–27; sequence LSYLLEPASLALILTAVSVAY. Residues 28–57 lie on the Cytoplasmic side of the membrane; the sequence is ASASRALDHGREMERNLDFSEASITLDRSQ. A helical transmembrane segment spans residues 58–75; it reads ALMIPLASSCSLLLMFYL. At 76–80 the chain is on the lumenal side; sequence FSSVS. The helical transmembrane segment at 81–103 threads the bilayer; sequence HLVTAFTAVASAMALFFCLSPYV. The Cytoplasmic portion of the chain corresponds to 104 to 123; the sequence is NCVRSRLGVGDPFVSRCCSK. Residues 124–146 traverse the membrane as a helical segment; that stretch reads PFTRLQGLLVAICVGTVVAWLVS. Residues 147–149 are Lumenal-facing; the sequence is GHW. The chain crosses the membrane as a helical span at residues 150-167; the sequence is LLNNLLGISICIAFVSHV. At 168-171 the chain is on the cytoplasmic side; it reads RLPN. The chain crosses the membrane as a helical span at residues 172 to 192; it reads IKICALLLVCLFVYDVFWVFF. D186 is a catalytic residue. Residues 193–258 are Lumenal-facing; it reads SERFFGANVM…LAPGSSPGDY (66 aa). Residues 259–279 traverse the membrane as a helical segment; sequence MMLGLGDMAIPGMLLALVLSF. The active site involves D265. The Cytoplasmic portion of the chain corresponds to 280 to 301; the sequence is DHRKIKDMSVSQDMPPSKQRKY. A helical membrane pass occupies residues 302–322; it reads VWYALTGYGVGLVTALAAGIL. Residues 323–326 are Lumenal-facing; sequence SQSP. A helical membrane pass occupies residues 327 to 347; sequence QPALLYLVPSTLGPVMYMSWL. The PAL motif lies at 328-330; that stretch reads PAL. Over 348–371 the chain is Cytoplasmic; that stretch reads RNELWELWEGSRPIINDKAHLLEV.

This sequence belongs to the peptidase A22B family.

It is found in the endosome membrane. Intramembrane-cleaving aspartic protease (I-CLiP) that cleaves type II membrane signal peptides in the hydrophobic plane of the membrane. This Oryza sativa subsp. japonica (Rice) protein is Signal peptide peptidase-like 1 (SPPL1).